The primary structure comprises 255 residues: 3-deoxy-manno-octulosonate cytidylyltransferase (255 aa).

Belongs to the KdsB family.

It is found in the cytoplasm. The enzyme catalyses 3-deoxy-alpha-D-manno-oct-2-ulosonate + CTP = CMP-3-deoxy-beta-D-manno-octulosonate + diphosphate. It participates in nucleotide-sugar biosynthesis; CMP-3-deoxy-D-manno-octulosonate biosynthesis; CMP-3-deoxy-D-manno-octulosonate from 3-deoxy-D-manno-octulosonate and CTP: step 1/1. It functions in the pathway bacterial outer membrane biogenesis; lipopolysaccharide biosynthesis. Functionally, activates KDO (a required 8-carbon sugar) for incorporation into bacterial lipopolysaccharide in Gram-negative bacteria. The chain is 3-deoxy-manno-octulosonate cytidylyltransferase from Cellvibrio japonicus (strain Ueda107) (Pseudomonas fluorescens subsp. cellulosa).